The sequence spans 262 residues: Acyl-[acyl-carrier-protein]--UDP-N-acetylglucosamine O-acyltransferase (262 aa).

It belongs to the transferase hexapeptide repeat family. LpxA subfamily. Homotrimer.

The protein resides in the cytoplasm. It carries out the reaction a (3R)-hydroxyacyl-[ACP] + UDP-N-acetyl-alpha-D-glucosamine = a UDP-3-O-[(3R)-3-hydroxyacyl]-N-acetyl-alpha-D-glucosamine + holo-[ACP]. It participates in glycolipid biosynthesis; lipid IV(A) biosynthesis; lipid IV(A) from (3R)-3-hydroxytetradecanoyl-[acyl-carrier-protein] and UDP-N-acetyl-alpha-D-glucosamine: step 1/6. Functionally, involved in the biosynthesis of lipid A, a phosphorylated glycolipid that anchors the lipopolysaccharide to the outer membrane of the cell. The protein is Acyl-[acyl-carrier-protein]--UDP-N-acetylglucosamine O-acyltransferase of Pasteurella multocida (strain Pm70).